The following is a 335-amino-acid chain: Photosystem II assembly lipoprotein Ycf48 (335 aa).

A signal peptide spans 1-23 (MSRLFSNLFNLLLIAAIGFGLSG). A lipid anchor (N-palmitoyl cysteine) is attached at cysteine 24. Cysteine 24 is lipidated: S-diacylglycerol cysteine.

This sequence belongs to the Ycf48 family. In terms of assembly, part of early PSII assembly complexes which includes D1 (psbA) and PsbI; not found in mature PSII. Binds to the lumenal side of PSII complexes. Interacts with YidC.

The protein localises to the cellular thylakoid membrane. In terms of biological role, a factor required for optimal assembly of photosystem II (PSII), acting in the early stages of PSII assembly. Also plays a role in replacement of photodamaged D1 (psbA). Assists YidC in synthesis of chlorophyll-binding proteins. The sequence is that of Photosystem II assembly lipoprotein Ycf48 from Prochlorococcus marinus (strain MIT 9313).